We begin with the raw amino-acid sequence, 495 residues long: MRTLSLLILFLSTFLFAQVPKELLEFFQRSGYVVEKEGEKVLIDLPRGKAFPGEIFEVFQSKKPIIHPVTKKVLGYKEEKVGEVEVIKPRENFSEAKTLENNGIKPGDRVKLKIGSVCYIGGDEGYYALSQVVQNVKRNSENCDYVVKELENGYGVSYKGKPLAFFQYSGVGFAKRGGVFEDFALKAKFVRSLESLPLSADICKLFGKKDYLVVLFSDKVKVYEVLKTDFVEVLSYAIPTGYPVGVVCYENKGRSAVLVNMISNGEASSAVLSPVGNSLMLTDKNVPYLFGFFYQNGKKVLIGQEFKGSWGKVYRFELRGDKLVRKDALNLPEDFRVDGANAWNNVLVFVDNDGQLRVYVNDEEVLTEDGFGLSYTTAEVPGVYEYAEGDKYGFYVRPNFTKVYKDVLPLIAKNRASNIFQLVGFTKFTEGELWTVVRKKEKVYEAIKLKGRKFEEAIQAIVRDSEGRIFVITGSKGTIPIQNRGEVYLIEITPL.

The first 17 residues, 1-17, serve as a signal peptide directing secretion; the sequence is MRTLSLLILFLSTFLFA.

This is an uncharacterized protein from Aquifex aeolicus (strain VF5).